The sequence spans 181 residues: Protein Syd (181 aa).

Belongs to the Syd family.

The protein resides in the cell inner membrane. Its function is as follows. Interacts with the SecY protein in vivo. May bind preferentially to an uncomplexed state of SecY, thus functioning either as a chelating agent for excess SecY in the cell or as a regulatory factor that negatively controls the translocase function. The sequence is that of Protein Syd from Enterobacter sp. (strain 638).